A 392-amino-acid chain; its full sequence is DNA replication and repair protein RecF (392 aa).

30–37 contacts ATP; it reads GRNGFGKT.

The protein belongs to the RecF family.

It is found in the cytoplasm. The RecF protein is involved in DNA metabolism; it is required for DNA replication and normal SOS inducibility. RecF binds preferentially to single-stranded, linear DNA. It also seems to bind ATP. The sequence is that of DNA replication and repair protein RecF from Corynebacterium aurimucosum (strain ATCC 700975 / DSM 44827 / CIP 107346 / CN-1) (Corynebacterium nigricans).